The following is a 248-amino-acid chain: Ureidoacrylate amidohydrolase RutB (248 aa).

Aspartate 43 serves as the catalytic Proton acceptor. Residue lysine 152 is part of the active site. Cysteine 185 serves as the catalytic Nucleophile.

It belongs to the isochorismatase family. RutB subfamily.

It catalyses the reaction (Z)-3-ureidoacrylate + H2O + H(+) = (Z)-3-aminoacrylate + NH4(+) + CO2. The catalysed reaction is (Z)-3-ureidoacrylate + H2O = (Z)-3-aminoacrylate + carbamate + H(+). It carries out the reaction (Z)-2-methylureidoacrylate + H2O + H(+) = (Z)-2-methylaminoacrylate + NH4(+) + CO2. Hydrolyzes ureidoacrylate to form aminoacrylate and carbamate. The carbamate hydrolyzes spontaneously, thereby releasing one of the nitrogen atoms of the pyrimidine ring as ammonia and one of its carbon atoms as CO2. The polypeptide is Ureidoacrylate amidohydrolase RutB (Serratia proteamaculans (strain 568)).